A 200-amino-acid polypeptide reads, in one-letter code: Holliday junction branch migration complex subunit RuvA (200 aa).

A domain I region spans residues 1–64; that stretch reads MIGRIVGTLI…EDSHTLYGFI (64 aa). The interval 65-143 is domain II; sequence DKNERALFRV…QAAKTDLFSA (79 aa). The segment at 144 to 149 is flexible linker; that stretch reads PAVLRQ. The domain III stretch occupies residues 150–200; the sequence is VQADPRQEAEAALISLGYKPQEAAKAIAGVPVDAANSEDVIKAALKGMLRK.

This sequence belongs to the RuvA family. Homotetramer. Forms an RuvA(8)-RuvB(12)-Holliday junction (HJ) complex. HJ DNA is sandwiched between 2 RuvA tetramers; dsDNA enters through RuvA and exits via RuvB. An RuvB hexamer assembles on each DNA strand where it exits the tetramer. Each RuvB hexamer is contacted by two RuvA subunits (via domain III) on 2 adjacent RuvB subunits; this complex drives branch migration. In the full resolvosome a probable DNA-RuvA(4)-RuvB(12)-RuvC(2) complex forms which resolves the HJ.

It is found in the cytoplasm. Its function is as follows. The RuvA-RuvB-RuvC complex processes Holliday junction (HJ) DNA during genetic recombination and DNA repair, while the RuvA-RuvB complex plays an important role in the rescue of blocked DNA replication forks via replication fork reversal (RFR). RuvA specifically binds to HJ cruciform DNA, conferring on it an open structure. The RuvB hexamer acts as an ATP-dependent pump, pulling dsDNA into and through the RuvAB complex. HJ branch migration allows RuvC to scan DNA until it finds its consensus sequence, where it cleaves and resolves the cruciform DNA. In Marinomonas sp. (strain MWYL1), this protein is Holliday junction branch migration complex subunit RuvA.